A 373-amino-acid polypeptide reads, in one-letter code: Cyclin-A3-1 (373 aa).

The tract at residues 50 to 80 is disordered; it reads AVVLKPQPAPRGGKRAASHAAEPKKPAPPPA.

This sequence belongs to the cyclin family. Cyclin AB subfamily.

This Oryza sativa subsp. japonica (Rice) protein is Cyclin-A3-1 (CYCA3-1).